Reading from the N-terminus, the 272-residue chain is Glutamate racemase (272 aa).

Substrate-binding positions include 13 to 14 (DS) and 45 to 46 (YG). The active-site Proton donor/acceptor is the Cys76. Residue 77 to 78 (NT) participates in substrate binding. The active-site Proton donor/acceptor is the Cys186. 187–188 (TH) lines the substrate pocket.

It belongs to the aspartate/glutamate racemases family.

The catalysed reaction is L-glutamate = D-glutamate. Its pathway is cell wall biogenesis; peptidoglycan biosynthesis. Its function is as follows. Provides the (R)-glutamate required for cell wall biosynthesis. The polypeptide is Glutamate racemase (Cupriavidus pinatubonensis (strain JMP 134 / LMG 1197) (Cupriavidus necator (strain JMP 134))).